Here is a 243-residue protein sequence, read N- to C-terminus: Ribosomal RNA small subunit methyltransferase G (243 aa).

Residues Gly-97, Leu-102, 148–149, and Arg-161 each bind S-adenosyl-L-methionine; that span reads VE.

It belongs to the methyltransferase superfamily. RNA methyltransferase RsmG family.

Its subcellular location is the cytoplasm. It carries out the reaction guanosine(527) in 16S rRNA + S-adenosyl-L-methionine = N(7)-methylguanosine(527) in 16S rRNA + S-adenosyl-L-homocysteine. In terms of biological role, specifically methylates the N7 position of guanine in position 527 of 16S rRNA. This Paracidovorax citrulli (strain AAC00-1) (Acidovorax citrulli) protein is Ribosomal RNA small subunit methyltransferase G.